Here is a 156-residue protein sequence, read N- to C-terminus: Ribosome maturation factor RimP (156 aa).

The protein belongs to the RimP family.

It is found in the cytoplasm. Its function is as follows. Required for maturation of 30S ribosomal subunits. The polypeptide is Ribosome maturation factor RimP (Microcystis aeruginosa (strain NIES-843 / IAM M-2473)).